A 617-amino-acid chain; its full sequence is tRNA 5-methylaminomethyl-2-thiouridine biosynthesis bifunctional protein MnmC (617 aa).

The interval 1–226 (MLDWQNGQLY…KREMLQGDLP (226 aa)) is tRNA (mnm(5)s(2)U34)-methyltransferase. Residues 241–617 (IGGGIAGCAA…SPAIPVSIKG (377 aa)) form an FAD-dependent cmnm(5)s(2)U34 oxidoreductase region.

In the N-terminal section; belongs to the methyltransferase superfamily. tRNA (mnm(5)s(2)U34)-methyltransferase family. It in the C-terminal section; belongs to the DAO family. It depends on FAD as a cofactor.

It is found in the cytoplasm. It carries out the reaction 5-aminomethyl-2-thiouridine(34) in tRNA + S-adenosyl-L-methionine = 5-methylaminomethyl-2-thiouridine(34) in tRNA + S-adenosyl-L-homocysteine + H(+). In terms of biological role, catalyzes the last two steps in the biosynthesis of 5-methylaminomethyl-2-thiouridine (mnm(5)s(2)U) at the wobble position (U34) in tRNA. Catalyzes the FAD-dependent demodification of cmnm(5)s(2)U34 to nm(5)s(2)U34, followed by the transfer of a methyl group from S-adenosyl-L-methionine to nm(5)s(2)U34, to form mnm(5)s(2)U34. The protein is tRNA 5-methylaminomethyl-2-thiouridine biosynthesis bifunctional protein MnmC of Nitrosospira multiformis (strain ATCC 25196 / NCIMB 11849 / C 71).